We begin with the raw amino-acid sequence, 442 residues long: GTPase Der (442 aa).

EngA-type G domains are found at residues 4–169 and 178–353; these read PIVA…PENN and IKIA…EQAT. GTP-binding positions include 10-17, 57-61, 121-124, 184-191, 231-235, and 296-299; these read GRPNVGKS, DTGGL, NKIE, DTAGM, and NKWD. In terms of domain architecture, KH-like spans 354–438; the sequence is RRISTSVLNE…PMRFFIRERE (85 aa).

The protein belongs to the TRAFAC class TrmE-Era-EngA-EngB-Septin-like GTPase superfamily. EngA (Der) GTPase family. Associates with the 50S ribosomal subunit.

In terms of biological role, GTPase that plays an essential role in the late steps of ribosome biogenesis. This is GTPase Der from Heliobacterium modesticaldum (strain ATCC 51547 / Ice1).